Reading from the N-terminus, the 132-residue chain is MSDPSEGSLTPGELLVDDAPVELNAGRETATVTVENTGDRPVQVGSHYHFFETNPALAFDRETAYGMRLNIPAGTAVRFEPGAERDVELVAIGGDRIVHGMDGLVNGDLDDEATRERAMDRAAAAGYRGVER.

Belongs to the urease beta subunit family. Heterotrimer of UreA (gamma), UreB (beta) and UreC (alpha) subunits. Three heterotrimers associate to form the active enzyme.

Its subcellular location is the cytoplasm. It catalyses the reaction urea + 2 H2O + H(+) = hydrogencarbonate + 2 NH4(+). Its pathway is nitrogen metabolism; urea degradation; CO(2) and NH(3) from urea (urease route): step 1/1. This chain is Urease subunit beta, found in Natronomonas pharaonis (strain ATCC 35678 / DSM 2160 / CIP 103997 / JCM 8858 / NBRC 14720 / NCIMB 2260 / Gabara) (Halobacterium pharaonis).